Consider the following 490-residue polypeptide: Bifunctional protein HldE (490 aa).

Residues 1-330 form a ribokinase region; that stretch reads MERKNVESLF…GSMGFQHSDS (330 aa). 205–208 is a binding site for ATP; it reads NRKE. Residue D275 is part of the active site. The interval 356–490 is cytidylyltransferase; sequence FTNGCFDLLH…DKILRAYGEE (135 aa).

It in the N-terminal section; belongs to the carbohydrate kinase PfkB family. In the C-terminal section; belongs to the cytidylyltransferase family. In terms of assembly, homodimer.

The catalysed reaction is D-glycero-beta-D-manno-heptose 7-phosphate + ATP = D-glycero-beta-D-manno-heptose 1,7-bisphosphate + ADP + H(+). It catalyses the reaction D-glycero-beta-D-manno-heptose 1-phosphate + ATP + H(+) = ADP-D-glycero-beta-D-manno-heptose + diphosphate. It participates in nucleotide-sugar biosynthesis; ADP-L-glycero-beta-D-manno-heptose biosynthesis; ADP-L-glycero-beta-D-manno-heptose from D-glycero-beta-D-manno-heptose 7-phosphate: step 1/4. The protein operates within nucleotide-sugar biosynthesis; ADP-L-glycero-beta-D-manno-heptose biosynthesis; ADP-L-glycero-beta-D-manno-heptose from D-glycero-beta-D-manno-heptose 7-phosphate: step 3/4. In terms of biological role, catalyzes the phosphorylation of D-glycero-D-manno-heptose 7-phosphate at the C-1 position to selectively form D-glycero-beta-D-manno-heptose-1,7-bisphosphate. Its function is as follows. Catalyzes the ADP transfer from ATP to D-glycero-beta-D-manno-heptose 1-phosphate, yielding ADP-D-glycero-beta-D-manno-heptose. The sequence is that of Bifunctional protein HldE from Geobacter metallireducens (strain ATCC 53774 / DSM 7210 / GS-15).